We begin with the raw amino-acid sequence, 1320 residues long: CAP-Gly domain-containing linker protein 1 (1320 aa).

Positions 1–53 (MSMLKPSGLKAPTKILKPGSTALKTPAAAAAPLEKTVPSEKASGPPSSETQEE) are disordered. Residues 21 to 35 (TALKTPAAAAAPLEK) show a composition bias toward low complexity. Ser-48 carries the post-translational modification Phosphoserine. Thr-50 bears the Phosphothreonine mark. Positions 78–120 (GETQFAPGQWAGIVLDEPIGKNDGSVAGVRYFQCEPLKGIFTR) constitute a CAP-Gly 1 domain. Positions 97-101 (GKNDG) are important for tubulin binding. Position 146 is a phosphoserine (Ser-146). Over residues 156–171 (VSSSPATPSNIPQKPS) the composition is skewed to polar residues. The disordered stretch occupies residues 156–181 (VSSSPATPSNIPQKPSQPVAKETSAT). Thr-181 carries the phosphothreonine modification. Phosphoserine occurs at positions 194, 196, 199, and 203. The CAP-Gly 2 domain maps to 231 to 273 (GETDFAKGEWCGVELDEPLGKNDGAVAGTRYFQCQPKYGLFAP). The span at 301 to 331 (TTPASLKRSPSASSLSSMSSVASSVSSKPSR) shows a compositional bias: low complexity. Residues 301 to 338 (TTPASLKRSPSASSLSSMSSVASSVSSKPSRTGLLTET) form a disordered region. At Ser-309 the chain carries Phosphoserine. Ser-311 bears the Phosphoserine; by PKA mark. Phosphoserine occurs at positions 314 and 347. A disordered region spans residues 1089–1109 (SLPSNTLRESEYRKDADEEKA). Positions 1096–1109 (RESEYRKDADEEKA) are enriched in basic and acidic residues. Phosphoserine is present on Ser-1116. A disordered region spans residues 1178 to 1201 (KRQLSSSSGNTDVQTEEDERAQES). Over residues 1180–1190 (QLSSSSGNTDV) the composition is skewed to polar residues. At Ser-1246 the chain carries Phosphoserine. A CCHC-type zinc finger spans residues 1299-1316 (PYCEICEMFGHWATNCND).

Interacts with MTOR; phosphorylates and regulates CLIP1. Interacts (via CAP-Gly domains) with tubulin and TUBA1B. Interacts with SLAIN2. Interacts with MAPRE1 and MAPRE3. Interacts (via zinc finger) with DCTN1. Binds preferentially to tyrosinated microtubules, and only marginally to detyrosinated microtubules. Post-translationally, phosphorylated. Phosphorylation induces conformational changes by increasing the affinity of the N-terminus for C-terminus, resulting in inhibition of its function thus decreasing its binding to microtubules and DCTN1. Exhibits a folded, autoinhibited conformation when phosphorylated and an open conformation when dephosphorylated with increased binding affinity to microtubules and DCTN1. Phosphorylation regulates its recruitment to tyrosinated microtubules and the recruitment of vesicular cargo to microtubules in neurons. Phosphorylation by MTOR may positively regulate CLIP1 association with microtubules.

It localises to the cytoplasm. Its subcellular location is the cytoskeleton. It is found in the cytoplasmic vesicle membrane. The protein localises to the cell projection. The protein resides in the ruffle. In terms of biological role, binds to the plus end of microtubules and regulates the dynamics of the microtubule cytoskeleton. Promotes microtubule growth and microtubule bundling. Links cytoplasmic vesicles to microtubules and thereby plays an important role in intracellular vesicle trafficking. Plays a role macropinocytosis and endosome trafficking. In Rattus norvegicus (Rat), this protein is CAP-Gly domain-containing linker protein 1 (Clip1).